The following is a 977-amino-acid chain: Alanine--tRNA ligase (977 aa).

The segment at 512 to 535 (SQVDSKLQSSTPAGTGSYDSKQVS) is disordered. 4 residues coordinate Zn(2+): His-618, His-622, Cys-720, and His-724.

Belongs to the class-II aminoacyl-tRNA synthetase family. Zn(2+) serves as cofactor.

It is found in the cytoplasm. It catalyses the reaction tRNA(Ala) + L-alanine + ATP = L-alanyl-tRNA(Ala) + AMP + diphosphate. Catalyzes the attachment of alanine to tRNA(Ala) in a two-step reaction: alanine is first activated by ATP to form Ala-AMP and then transferred to the acceptor end of tRNA(Ala). Also edits incorrectly charged Ser-tRNA(Ala) and Gly-tRNA(Ala) via its editing domain. In Leptospira interrogans serogroup Icterohaemorrhagiae serovar copenhageni (strain Fiocruz L1-130), this protein is Alanine--tRNA ligase.